The following is a 271-amino-acid chain: Ribosomal RNA small subunit methyltransferase A (271 aa).

S-adenosyl-L-methionine contacts are provided by histidine 14, leucine 16, glycine 41, glutamate 63, aspartate 89, and asparagine 107.

It belongs to the class I-like SAM-binding methyltransferase superfamily. rRNA adenine N(6)-methyltransferase family. RsmA subfamily.

The protein resides in the cytoplasm. The catalysed reaction is adenosine(1518)/adenosine(1519) in 16S rRNA + 4 S-adenosyl-L-methionine = N(6)-dimethyladenosine(1518)/N(6)-dimethyladenosine(1519) in 16S rRNA + 4 S-adenosyl-L-homocysteine + 4 H(+). Specifically dimethylates two adjacent adenosines (A1518 and A1519) in the loop of a conserved hairpin near the 3'-end of 16S rRNA in the 30S particle. May play a critical role in biogenesis of 30S subunits. The protein is Ribosomal RNA small subunit methyltransferase A of Lawsonia intracellularis (strain PHE/MN1-00).